Reading from the N-terminus, the 62-residue chain is Protein CYSTEINE-RICH TRANSMEMBRANE MODULE 2 (62 aa).

Helical transmembrane passes span 23-39 (VAVAATRSASVVAAAFD) and 33-53 (VVAAAFDFYICIIISTLLSLI).

The protein belongs to the CYSTM1 family. As to quaternary structure, heterodimers. Binds weakly to CYSTM7 and WIH1/CYSTM13. Mostly expressed in stems, siliques, leaves and flowers and, to a lower extent, in roots.

The protein localises to the cell membrane. It is found in the nucleus. It localises to the secreted. Its subcellular location is the cell wall. Functionally, involved in resistance to abiotic stress. Its function is as follows. Confers resistance to heavy metal ions (e.g. cadmium (CdCl(2)) and copper (CuCl(2))) by chelating them at the plasma membrane of root cells, thus stopping their entry and reducing their accumulation. The chain is Protein CYSTEINE-RICH TRANSMEMBRANE MODULE 2 from Arabidopsis thaliana (Mouse-ear cress).